Reading from the N-terminus, the 302-residue chain is AT-hook motif nuclear-localized protein 29 (302 aa).

The segment at 1 to 95 (MDGGYDQSGG…KPPVIVTRDS (95 aa)) is disordered. Positions 32–44 (QLHPLPQPQPQPQ) are enriched in pro residues. Positions 72 to 84 (KRPRGRPPGSKNK) form a DNA-binding region, a.T hook. The PPC domain maps to 96 to 241 (PNVLRSHVLE…DEGGEGGEGG (146 aa)). Residues 164 to 169 (GRFEIL) form a required for the binding to non-AHL interactors region. Residues 229–279 (PLEDEGGEGGEGGEVGEGGGGEGGPPPATSSSPPSGAGQGQLRGNMSGYDQ) are disordered. The span at 237-251 (GGEGGEVGEGGGGEG) shows a compositional bias: gly residues.

In terms of assembly, homodimer. Interacts with AHL5, AHL12, AHL25, AHL27, TCP4, TCP13 and EF114. Expressed in the hypocotyl and the vascular tissue of seedling.

It is found in the nucleus. In terms of biological role, transcription factor that specifically binds AT-rich DNA sequences related to the nuclear matrix attachment regions (MARs). Acts redundantly with AHL18, AHL22 and AHL27 in the regulation of flowering and regulation of the hypocotyl elongation. Acts redundantly with AHL27/ESC to modulate hypocotyl growth inhibition in response to light. This is AT-hook motif nuclear-localized protein 29 from Arabidopsis thaliana (Mouse-ear cress).